The sequence spans 290 residues: Nucleotide-binding protein BAV3158 (290 aa).

Residue 9–16 coordinates ATP; sequence GISGSGKS. 58-61 is a GTP binding site; sequence DVRS.

This sequence belongs to the RapZ-like family.

Displays ATPase and GTPase activities. The sequence is that of Nucleotide-binding protein BAV3158 from Bordetella avium (strain 197N).